Reading from the N-terminus, the 278-residue chain is 4-hydroxy-tetrahydrodipicolinate reductase (278 aa).

NAD(+) contacts are provided by residues 13-18 and 111-113; these read GAAGKM and GTT. The Proton donor/acceptor role is filled by His-167. (S)-2,3,4,5-tetrahydrodipicolinate is bound at residue His-168. The active-site Proton donor is the Lys-171. 177–178 contributes to the (S)-2,3,4,5-tetrahydrodipicolinate binding site; sequence GT.

The protein belongs to the DapB family.

The protein localises to the cytoplasm. It catalyses the reaction (S)-2,3,4,5-tetrahydrodipicolinate + NAD(+) + H2O = (2S,4S)-4-hydroxy-2,3,4,5-tetrahydrodipicolinate + NADH + H(+). The enzyme catalyses (S)-2,3,4,5-tetrahydrodipicolinate + NADP(+) + H2O = (2S,4S)-4-hydroxy-2,3,4,5-tetrahydrodipicolinate + NADPH + H(+). It participates in amino-acid biosynthesis; L-lysine biosynthesis via DAP pathway; (S)-tetrahydrodipicolinate from L-aspartate: step 4/4. Catalyzes the conversion of 4-hydroxy-tetrahydrodipicolinate (HTPA) to tetrahydrodipicolinate. This chain is 4-hydroxy-tetrahydrodipicolinate reductase, found in Mastigocladus laminosus (Fischerella sp.).